The sequence spans 592 residues: Probable tubulin polyglutamylase TTLL2 (592 aa).

2 disordered regions span residues 1 to 23 (MRGRDLCSSTQSQALGSLRTTTP) and 51 to 77 (GVSIPPRRGRPTPTLEKKKKPHLMAED). Polar residues predominate over residues 7-23 (CSSTQSQALGSLRTTTP). Residues 84–427 (LKPLVFRVDE…NGLRNEGREA (344 aa)) form the TTL domain. Residues K212, 218-219 (RG), 240-243 (QKYI), and 253-255 (KCD) contribute to the ATP site. R218 provides a ligand contact to a protein. R279 is a binding site for L-glutamate. 298 to 299 (TN) provides a ligand contact to ATP. L-glutamate-binding residues include S301 and K321. D373, E386, and N388 together coordinate Mg(2+). K404 lines the L-glutamate pocket.

The protein belongs to the tubulin--tyrosine ligase family. It depends on Mg(2+) as a cofactor. In terms of tissue distribution, testis.

Probable tubulin polyglutamylase that generates side chains of glutamate on the gamma-carboxyl group of specific glutamate residues within the C-terminal tail of target proteins. Similar to TTLL1, may acquire enzymatic activity only in complex with other proteins as it is most likely lacking domains important for autonomous activity. Probably involved in the side-chain initiation step of the polyglutamylation reaction rather than the elongation step. The chain is Probable tubulin polyglutamylase TTLL2 from Homo sapiens (Human).